We begin with the raw amino-acid sequence, 166 residues long: MALRMWASSTANALKLSSSASKSHLLPAFSISRCFSSVLEGLKYANSHEWVKHEGSVATIGITDHAQDHLGEVVFVELPEANSSVSKEKSFGAVESVKATSEILSPISGEVIEVNTKLTESPGLINSSPYEDGWMIKVKPSSPAELEALMGPKEYTKFCEEEDAAH.

A mitochondrion-targeting transit peptide spans 1–35; sequence MALRMWASSTANALKLSSSASKSHLLPAFSISRCF. In terms of domain architecture, Lipoyl-binding spans 57–139; that stretch reads VATIGITDHA…YEDGWMIKVK (83 aa). At K98 the chain carries N6-lipoyllysine. S141 bears the Phosphoserine mark.

Belongs to the GcvH family. The glycine cleavage system is composed of four proteins: P, T, L and H. The cofactor is (R)-lipoate. Post-translationally, S-nitrosylated and/or glutathionylated at unknown positions in response to nitric oxide.

The protein resides in the mitochondrion. Inhibited by harpin, S-nitrosoglutathione (GSNO), nitric oxide, N-ethylmaleimide and 5,5'-dithiobis-(2-nitrobenzoic acid). Functionally, the glycine decarboxylase (GDC) or glycine cleavage system catalyzes the degradation of glycine. The H protein shuttles the methylamine group of glycine from the P protein to the T protein. This is Glycine cleavage system H protein 3, mitochondrial (GDH3) from Arabidopsis thaliana (Mouse-ear cress).